Reading from the N-terminus, the 189-residue chain is Parkinson disease protein 7 homolog (189 aa).

Residue A2 is modified to N-acetylalanine; in Protein/nucleic acid deglycase DJ-1, N-terminally processed. S-palmitoyl cysteine attachment occurs at residues C46 and C53. Y67 is subject to Phosphotyrosine. Residue C106 is the Nucleophile of the active site. Cysteine sulfinic acid (-SO2H); alternate is present on C106. C106 is lipidated: S-palmitoyl cysteine; alternate. Residue H126 is part of the active site. Residue K130 forms a Glycyl lysine isopeptide (Lys-Gly) (interchain with G-Cter in SUMO) linkage. K148 carries the post-translational modification N6-acetyllysine. K182 carries the post-translational modification N6-succinyllysine.

Belongs to the peptidase C56 family. As to quaternary structure, homodimer. Binds EFCAB6/DJBP and PIAS2. Part of a ternary complex containing PARK7, EFCAB6/DJBP and AR. Interacts (via N-terminus) with OTUD7B. Interacts with BBS1, HIPK1, CLCF1 and MTERF. Forms a complex with PINK1 and PRKN. Interacts (via C-terminus) with NCF1; the interaction is enhanced by LPS and modulates NCF1 phosphorylation and membrane translocation. Interacts with NENF. Deglycase activity does not require glutathione as a cofactor, however, glycated glutathione constitutes a PARK7 substrate. is required as a cofactor. Sumoylated on Lys-130 by PIAS2 or PIAS4; which is essential for cell-growth promoting activity and transforming activity. Post-translationally, undergoes cleavage of a C-terminal peptide and subsequent activation of protease activity in response to oxidative stress. As to expression, detected in liver, heart, spleen and testis (at protein level). Detected in liver, heart, spleen, kidney, epididymidis, vas deferens, sperm cells and testis.

It is found in the cell membrane. It localises to the cytoplasm. Its subcellular location is the nucleus. The protein localises to the membrane raft. The protein resides in the mitochondrion. It is found in the endoplasmic reticulum. The enzyme catalyses N(omega)-(1-hydroxy-2-oxopropyl)-L-arginyl-[protein] + H2O = lactate + L-arginyl-[protein] + H(+). The catalysed reaction is N(6)-(1-hydroxy-2-oxopropyl)-L-lysyl-[protein] + H2O = lactate + L-lysyl-[protein] + H(+). It carries out the reaction S-(1-hydroxy-2-oxopropyl)-L-cysteinyl-[protein] + H2O = lactate + L-cysteinyl-[protein] + H(+). It catalyses the reaction N(omega)-(1-hydroxy-2-oxoethyl)-L-arginyl-[protein] + H2O = L-arginyl-[protein] + glycolate + H(+). The enzyme catalyses N(6)-(1-hydroxy-2-oxoethyl)-L-lysyl-[protein] + H2O = glycolate + L-lysyl-[protein] + H(+). The catalysed reaction is S-(1-hydroxy-2-oxoethyl)-L-cysteinyl-[protein] + H2O = glycolate + L-cysteinyl-[protein] + H(+). It carries out the reaction N(2)-(1-hydroxy-2-oxopropyl)-dGTP + H2O = lactate + dGTP + H(+). It catalyses the reaction N(2)-(1-hydroxy-2-oxopropyl)-GTP + H2O = lactate + GTP + H(+). The enzyme catalyses N(2)-(1-hydroxy-2-oxopropyl)-GDP + H2O = lactate + GDP + H(+). The catalysed reaction is N(2)-(1-hydroxy-2-oxopropyl)-GMP + H2O = lactate + GMP + H(+). It carries out the reaction N(2)-(1-hydroxy-2-oxoethyl)-dGTP + H2O = dGTP + glycolate + H(+). It catalyses the reaction N(2)-(1-hydroxy-2-oxoethyl)-GTP + H2O = glycolate + GTP + H(+). The enzyme catalyses N(2)-(1-hydroxy-2-oxoethyl)-GDP + H2O = glycolate + GDP + H(+). The catalysed reaction is N(2)-(1-hydroxy-2-oxoethyl)-GMP + H2O = glycolate + GMP + H(+). It carries out the reaction an N(2)-(1-hydroxy-2-oxopropyl)-guanosine in RNA + H2O = a guanosine in RNA + lactate + H(+). It catalyses the reaction an N(2)-(1-hydroxy-2-oxopropyl)-2'-deoxyguanosine in DNA + H2O = a 2'-deoxyguanosine in DNA + lactate + H(+). The enzyme catalyses an N(2)-(1-hydroxy-2-oxoethyl)-guanosine in RNA + H2O = a guanosine in RNA + glycolate + H(+). The catalysed reaction is an N(2)-(1-hydroxy-2-oxoethyl)-2'-deoxyguanosine in DNA + H2O = a 2'-deoxyguanosine in DNA + glycolate + H(+). In terms of biological role, multifunctional protein with controversial molecular function which plays an important role in cell protection against oxidative stress and cell death acting as oxidative stress sensor and redox-sensitive chaperone and protease. It is involved in neuroprotective mechanisms like the stabilization of NFE2L2 and PINK1 proteins, male fertility as a positive regulator of androgen signaling pathway as well as cell growth and transformation through, for instance, the modulation of NF-kappa-B signaling pathway. Has been described as a protein and nucleotide deglycase that catalyzes the deglycation of the Maillard adducts formed between amino groups of proteins or nucleotides and reactive carbonyl groups of glyoxals. But this function is rebuted by other works. As a protein deglycase, repairs methylglyoxal- and glyoxal-glycated proteins, and releases repaired proteins and lactate or glycolate, respectively. Deglycates cysteine, arginine and lysine residues in proteins, and thus reactivates these proteins by reversing glycation by glyoxals. Acts on early glycation intermediates (hemithioacetals and aminocarbinols), preventing the formation of advanced glycation endproducts (AGE) that cause irreversible damage. Also functions as a nucleotide deglycase able to repair glycated guanine in the free nucleotide pool (GTP, GDP, GMP, dGTP) and in DNA and RNA. Is thus involved in a major nucleotide repair system named guanine glycation repair (GG repair), dedicated to reversing methylglyoxal and glyoxal damage via nucleotide sanitization and direct nucleic acid repair. Protects histones from adduction by methylglyoxal, controls the levels of methylglyoxal-derived argininine modifications on chromatin. Able to remove the glycations and restore histone 3, histone glycation disrupts both local and global chromatin architecture by altering histone-DNA interactions as well as histone acetylation and ubiquitination levels. Displays a very low glyoxalase activity that may reflect its deglycase activity. Eliminates hydrogen peroxide and protects cells against hydrogen peroxide-induced cell death. Required for correct mitochondrial morphology and function as well as for autophagy of dysfunctional mitochondria. Plays a role in regulating expression or stability of the mitochondrial uncoupling proteins SLC25A14 and SLC25A27 in dopaminergic neurons of the substantia nigra pars compacta and attenuates the oxidative stress induced by calcium entry into the neurons via L-type channels during pacemaking. Regulates astrocyte inflammatory responses, may modulate lipid rafts-dependent endocytosis in astrocytes and neuronal cells. In pancreatic islets, involved in the maintenance of mitochondrial reactive oxygen species (ROS) levels and glucose homeostasis in an age- and diet dependent manner. Protects pancreatic beta cells from cell death induced by inflammatory and cytotoxic setting. Binds to a number of mRNAs containing multiple copies of GG or CC motifs and partially inhibits their translation but dissociates following oxidative stress. Metal-binding protein able to bind copper as well as toxic mercury ions, enhances the cell protection mechanism against induced metal toxicity. In macrophages, interacts with the NADPH oxidase subunit NCF1 to direct NADPH oxidase-dependent ROS production, and protects against sepsis. In Mesocricetus auratus (Golden hamster), this protein is Parkinson disease protein 7 homolog (PARK7).